A 243-amino-acid polypeptide reads, in one-letter code: UPF0246 protein Sez_1855 (243 aa).

The protein belongs to the UPF0246 family.

This chain is UPF0246 protein Sez_1855, found in Streptococcus equi subsp. zooepidemicus (strain MGCS10565).